The chain runs to 622 residues: Elongation factor 4 (622 aa).

The tr-type G domain occupies 17–198 (ELLRNFCIIA…QIVRQIPAPV (182 aa)). Residues 29–34 (DHGKST) and 145–148 (NKID) each bind GTP.

The protein belongs to the TRAFAC class translation factor GTPase superfamily. Classic translation factor GTPase family. LepA subfamily.

The protein resides in the cell membrane. It catalyses the reaction GTP + H2O = GDP + phosphate + H(+). Its function is as follows. Required for accurate and efficient protein synthesis under certain stress conditions. May act as a fidelity factor of the translation reaction, by catalyzing a one-codon backward translocation of tRNAs on improperly translocated ribosomes. Back-translocation proceeds from a post-translocation (POST) complex to a pre-translocation (PRE) complex, thus giving elongation factor G a second chance to translocate the tRNAs correctly. Binds to ribosomes in a GTP-dependent manner. The sequence is that of Elongation factor 4 from Kineococcus radiotolerans (strain ATCC BAA-149 / DSM 14245 / SRS30216).